The following is a 303-amino-acid chain: T-box protein 38 (303 aa).

The segment at residues 14-195 (LSTPEIWEEF…HNKFASGFRS (182 aa)) is a DNA-binding region (T-box). The segment at 193–225 (FRSNGKRRLSSDSENSENSPPKRSKLVTPPTIS) is disordered. Over residues 204-213 (DSENSENSPP) the composition is skewed to low complexity.

It is found in the nucleus. Transcription factor. Required for mesodermal induction, acting redundantly with transcription factor tbx-37. Together with tbx-37, acts by inducing cell fates in the AB lineage, thereby playing a role in development of the anterior pharynx. The polypeptide is T-box protein 38 (tbx-38) (Caenorhabditis elegans).